A 43-amino-acid chain; its full sequence is Defensin (43 aa).

Intrachain disulfides connect Cys-3–Cys-34, Cys-20–Cys-39, and Cys-24–Cys-41.

Belongs to the invertebrate defensin family. Type 1 subfamily.

It is found in the secreted. In terms of biological role, antibacterial peptide. Affects Gram-positive bacteria M.luteus, B.megaterium, A.viridans, S.aureus and S.saprophyticus. Moderate activity against P.acidilactici and B.subtilis QB935. Also affects Gram-negative bacterium, D22 form of E.coli. This Pyrrhocoris apterus (Sap sucking bug) protein is Defensin.